A 530-amino-acid polypeptide reads, in one-letter code: Probable serine/threonine-protein kinase fnkB (530 aa).

Positions 11 to 268 (WEIVETLKSN…SITLIDHPFL (258 aa)) constitute a Protein kinase domain. ATP is bound by residues 17-25 (LKSNVFKVN) and Lys43. Asp131 functions as the Proton acceptor in the catalytic mechanism.

Belongs to the protein kinase superfamily. STE Ser/Thr protein kinase family. It depends on Mg(2+) as a cofactor.

It carries out the reaction L-seryl-[protein] + ATP = O-phospho-L-seryl-[protein] + ADP + H(+). The enzyme catalyses L-threonyl-[protein] + ATP = O-phospho-L-threonyl-[protein] + ADP + H(+). This Dictyostelium discoideum (Social amoeba) protein is Probable serine/threonine-protein kinase fnkB.